A 93-amino-acid polypeptide reads, in one-letter code: Small ribosomal subunit protein uS17 (93 aa).

Belongs to the universal ribosomal protein uS17 family. Part of the 30S ribosomal subunit.

Functionally, one of the primary rRNA binding proteins, it binds specifically to the 5'-end of 16S ribosomal RNA. The polypeptide is Small ribosomal subunit protein uS17 (Bordetella bronchiseptica (strain ATCC BAA-588 / NCTC 13252 / RB50) (Alcaligenes bronchisepticus)).